Consider the following 337-residue polypeptide: 2-ketoarginine methyltransferase (337 aa).

Belongs to the 2-ketoarginine methyltransferase family.

The enzyme catalyses 5-guanidino-2-oxopentanoate + S-adenosyl-L-methionine = (3R)-5-guanidino-3-methyl-2-oxopentanoate + S-adenosyl-L-homocysteine + H(+). It functions in the pathway antibiotic biosynthesis. In terms of biological role, S-adenosyl-L-methionine-dependent methyltransferase involved in the formation of the rare amino acid 3-methylarginine (MeArg), which is incorporated into the peptidyl nucleoside antibiotic arginomycin. Transfers the methyl group from S-adenosyl-L-methionine into 5-guanidino-2-oxopentanoate acid to yield 5-guanidino-3-methyl-2-oxopentanoate, a precursor of MeArg. This Streptomyces arginensis protein is 2-ketoarginine methyltransferase.